The primary structure comprises 293 residues: Ribosomal protein L11 methyltransferase (293 aa).

Residues Thr-145, Gly-166, Asp-188, and Asn-230 each coordinate S-adenosyl-L-methionine.

It belongs to the methyltransferase superfamily. PrmA family.

It is found in the cytoplasm. The catalysed reaction is L-lysyl-[protein] + 3 S-adenosyl-L-methionine = N(6),N(6),N(6)-trimethyl-L-lysyl-[protein] + 3 S-adenosyl-L-homocysteine + 3 H(+). Methylates ribosomal protein L11. This chain is Ribosomal protein L11 methyltransferase, found in Shewanella sediminis (strain HAW-EB3).